The sequence spans 202 residues: Large ribosomal subunit protein bL25 (202 aa).

This sequence belongs to the bacterial ribosomal protein bL25 family. CTC subfamily. Part of the 50S ribosomal subunit; part of the 5S rRNA/L5/L18/L25 subcomplex. Contacts the 5S rRNA. Binds to the 5S rRNA independently of L5 and L18.

In terms of biological role, this is one of the proteins that binds to the 5S RNA in the ribosome where it forms part of the central protuberance. The sequence is that of Large ribosomal subunit protein bL25 from Nitrosomonas eutropha (strain DSM 101675 / C91 / Nm57).